Consider the following 641-residue polypeptide: SUMO-activating enzyme subunit 2-B (641 aa).

Residues 24 to 29 (GAGGIG), Asp-48, 56 to 59 (NLNR), Lys-72, 95 to 96 (SI), and 117 to 122 (DNNAAR) each bind ATP. Zn(2+)-binding residues include Cys-158 and Cys-161. The active-site Glycyl thioester intermediate is the Cys-173. Zn(2+) is bound by residues Cys-439 and Cys-442. A disordered region spans residues 546-641 (GDVPEKGPQK…EEDDDIIALD (96 aa)). The span at 548-561 (VPEKGPQKPPEESV) shows a compositional bias: basic and acidic residues. Over residues 562–579 (KNITNGSDDGAQPSTSKA) the composition is skewed to polar residues. 2 stretches are compositionally biased toward acidic residues: residues 582 to 594 (QDDV…DEES) and 630 to 641 (PVEEDDDIIALD).

Belongs to the ubiquitin-activating E1 family. Heterodimer of sae1 and uba2/sae2. The heterodimer corresponds to the two domains that are encoded on a single polypeptide chain in ubiquitin-activating enzyme E1. Interacts with ube2i.

The protein localises to the nucleus. The protein operates within protein modification; protein sumoylation. Functionally, the heterodimer acts as an E1 ligase for sumo1, sumo2, and sumo3. It mediates ATP-dependent activation of sumo proteins followed by formation of a thioester bond between a sumo protein and a conserved active site cysteine residue on uba2/sae2. The protein is SUMO-activating enzyme subunit 2-B (uba2-b) of Xenopus laevis (African clawed frog).